A 521-amino-acid chain; its full sequence is Glucosidase 2 subunit beta (521 aa).

Positions 1-14 (MLLLLLLLLPLCWA) are cleaved as a signal peptide. The residue at position 24 (S24) is a Phosphoserine. LDL-receptor class A domains follow at residues 37–71 (FTCL…AACP) and 69–113 (ACPN…TVCE). Cystine bridges form between C39–C58 and C56–C70. A substrate-binding site is contributed by D49. Ca(2+) contacts are provided by Q50, D53, Y55, D57, D63, and E64. Position 53 (D53) interacts with substrate. A glycan (N-linked (GlcNAc...) asparagine) is linked at N72. Cystine bridges form between C77-C99, C97-C112, and C100-C116. S89 carries the post-translational modification Phosphoserine; by PKC. Ca(2+) contacts are provided by R91, D94, V96, D98, D104, and E105. N6-succinyllysine is present on K166. The residue at position 168 (S168) is a Phosphoserine. 2 consecutive EF-hand domains span residues 209 to 244 (REQE…DTDG) and 245 to 290 (DGAL…TDIP). D222, N224, D226, M228, and E233 together coordinate Ca(2+). Disordered regions lie at residues 226 to 267 (DGMV…DTTS) and 280 to 350 (YRSE…EKMP). Acidic residues-rich tracts occupy residues 241–253 (DTDG…EEEA) and 308–331 (TEEE…EEEA). A compositionally biased stretch (pro residues) spans 332 to 343 (PPPLQPPQPPSP). Phosphoserine; by PKC occurs at positions 376 and 383. Residues 406 to 507 (SQCYELTTNE…ELMTPAACPE (102 aa)) form the MRH domain. Residues C408 and C421 are joined by a disulfide bond. S427 bears the Phosphoserine; by PKC mark. 2 cysteine pairs are disulfide-bonded: C464–C493 and C478–C505. N469 carries N-linked (GlcNAc...) asparagine glycosylation. The short motif at 518-521 (HDEL) is the Prevents secretion from ER element.

In terms of assembly, heterodimer of a catalytic alpha subunit (GANAB) and a beta subunit (PRKCSH). Binds glycosylated PTPRC. Expressed in kidney (at protein level).

It localises to the endoplasmic reticulum. Its pathway is glycan metabolism; N-glycan metabolism. Its function is as follows. Regulatory subunit of glucosidase II that cleaves sequentially the 2 innermost alpha-1,3-linked glucose residues from the Glc(2)Man(9)GlcNAc(2) oligosaccharide precursor of immature glycoproteins. Required for efficient PKD1/Polycystin-1 biogenesis and trafficking to the plasma membrane of the primary cilia. The chain is Glucosidase 2 subunit beta from Mus musculus (Mouse).